The following is a 266-amino-acid chain: Hydroxyethylthiazole kinase (266 aa).

M43 contacts substrate. Residues R119 and T166 each coordinate ATP. G193 is a binding site for substrate.

Belongs to the Thz kinase family. Mg(2+) serves as cofactor.

It catalyses the reaction 5-(2-hydroxyethyl)-4-methylthiazole + ATP = 4-methyl-5-(2-phosphooxyethyl)-thiazole + ADP + H(+). The protein operates within cofactor biosynthesis; thiamine diphosphate biosynthesis; 4-methyl-5-(2-phosphoethyl)-thiazole from 5-(2-hydroxyethyl)-4-methylthiazole: step 1/1. Functionally, catalyzes the phosphorylation of the hydroxyl group of 4-methyl-5-beta-hydroxyethylthiazole (THZ). This Methanococcus maripaludis (strain C7 / ATCC BAA-1331) protein is Hydroxyethylthiazole kinase.